The chain runs to 1036 residues: Mediator of RNA polymerase II transcription subunit 24 (1036 aa).

The protein belongs to the Mediator complex subunit 24 family. In terms of assembly, component of the Mediator complex.

Its subcellular location is the nucleus. In terms of biological role, component of the Mediator complex, a coactivator involved in the regulated transcription of nearly all RNA polymerase II-dependent genes. Mediator functions as a bridge to convey information from gene-specific regulatory proteins to the basal RNA polymerase II transcription machinery. Mediator is recruited to promoters by direct interactions with regulatory proteins and serves as a scaffold for the assembly of a functional preinitiation complex with RNA polymerase II and the general transcription factors. This is Mediator of RNA polymerase II transcription subunit 24 (MED24) from Anopheles gambiae (African malaria mosquito).